A 456-amino-acid chain; its full sequence is Cell adhesion molecule 1 (456 aa).

The first 47 residues, 1–47 (MASAVLPSGSQCAAAAAVAAAAAPPGLRLRLLLLLLSAAALIPTGDG), serve as a signal peptide directing secretion. The Ig-like V-type domain occupies 48–142 (QNLFTKDVTV…PPQESYTTIT (95 aa)). Topologically, residues 48–388 (QNLFTKDVTV…EEGTIGAVDH (341 aa)) are extracellular. The cysteines at positions 67 and 127 are disulfide-linked. Residues N70, N104, N116, and N168 are each glycosylated (N-linked (GlcNAc...) asparagine). 2 Ig-like C2-type domains span residues 147-241 (PRNL…RYLE) and 246-332 (PQVH…YMLY). Disulfide bonds link C169–C223 and C270–C316. Residues N307 and N311 are each glycosylated (N-linked (GlcNAc...) asparagine). The helical transmembrane segment at 389 to 409 (AVIGGVVAVVVFAMLCLLIIL) threads the bilayer. Topologically, residues 410–456 (GRYFARHKGTYFTHEAKGADDAADADTAIINAEGGQNNSEEKKEYFI) are cytoplasmic. T436 bears the Phosphothreonine mark. S448 carries the post-translational modification Phosphoserine.

The protein belongs to the nectin family. Homodimer (via Ig-like V-type domain). Interacts with FARP1. Interacts (via Ig-like V-type domain) with CRTAM (via Ig-like V-type domain); the interaction competes with CRTAM homodimerization and CADM1 homodimerization. Interacts (via C-terminus) with EPB41L3/DAL1. The interaction with EPB41L3/DAL1 may act to anchor CADM1 to the actin cytoskeleton. Interacts (via C-terminus) with MPP2 (via PDZ domain). Interacts (via C-terminus) with MPP3 (via PDZ domain); this interaction connects CADM1 with DLG1. Interacts (via C-terminus) with PALS2 (via PDZ domain). N-glycosylated. In terms of processing, glycosylation at Asn-70 and Asn-104 promotes adhesive binding and synapse induction. In terms of tissue distribution, expressed dominantly in epithelial cells but not expressed in fibroblast cells (at protein level). Expressed in the T-cell area of lymph nodes, specifically in CD8+ and CD4- CD8- dendritic cells (at protein level). Expressed in CD8+ dendritic cells in the spleen (at protein level). Expressed in CD103+ dendritic cells in the small intestine lamina propria and mesenteric lymph nodes (at protein level). Expressed in brain, lung, kidney, testis, heart, spleen and liver, but not expressed in skeletal muscle.

Its subcellular location is the cell membrane. The protein localises to the synaptic cell membrane. In terms of biological role, mediates homophilic cell-cell adhesion in a Ca(2+)-independent manner. Also mediates heterophilic cell-cell adhesion with CADM3 and NECTIN3 in a Ca(2+)-independent manner. Interaction with CRTAM promotes natural killer (NK) cell cytotoxicity and interferon-gamma (IFN-gamma) secretion by CD8+ T-cells in vitro as well as NK cell-mediated rejection of tumors expressing CADM1 in vivo. In mast cells, may mediate attachment to and promote communication with nerves. CADM1, together with MITF, is essential for development and survival of mast cells in vivo. By interacting with CRTAM and thus promoting the adhesion between CD8+ T-cells and CD8+ dendritic cells, regulates the retention of activated CD8+ T-cell within the draining lymph node. Required for the intestinal retention of intraepithelial CD4+ CD8+ T-cells and, to a lesser extent, intraepithelial and lamina propria CD8+ T-cells and CD4+ T-cells. Interaction with CRTAM promotes the adhesion to gut-associated CD103+ dendritic cells, which may facilitate the expression of gut-homing and adhesion molecules on T-cells and the conversion of CD4+ T-cells into CD4+ CD8+ T-cells. Acts as a synaptic cell adhesion molecule and plays a role in the formation of dendritic spines and in synapse assembly. May be involved in neuronal migration, axon growth, pathfinding, and fasciculation on the axons of differentiating neurons. May play diverse roles in the spermatogenesis including in the adhesion of spermatocytes and spermatids to Sertoli cells and for their normal differentiation into mature spermatozoa. This Mus musculus (Mouse) protein is Cell adhesion molecule 1.